Reading from the N-terminus, the 125-residue chain is Small ribosomal subunit protein uS12 (125 aa).

Residues 1 to 23 (MATVNQLVRKGRTKRTAKSSVPA) form a disordered region. D89 is subject to 3-methylthioaspartic acid. The disordered stretch occupies residues 102-125 (ADTAGVDKRRQGRSKYGAKRPKKK). A compositionally biased stretch (basic residues) spans 111–125 (RQGRSKYGAKRPKKK).

The protein belongs to the universal ribosomal protein uS12 family. Part of the 30S ribosomal subunit. Contacts proteins S8 and S17. May interact with IF1 in the 30S initiation complex.

Its function is as follows. With S4 and S5 plays an important role in translational accuracy. Functionally, interacts with and stabilizes bases of the 16S rRNA that are involved in tRNA selection in the A site and with the mRNA backbone. Located at the interface of the 30S and 50S subunits, it traverses the body of the 30S subunit contacting proteins on the other side and probably holding the rRNA structure together. The combined cluster of proteins S8, S12 and S17 appears to hold together the shoulder and platform of the 30S subunit. In Halorhodospira halophila (strain DSM 244 / SL1) (Ectothiorhodospira halophila (strain DSM 244 / SL1)), this protein is Small ribosomal subunit protein uS12.